Here is a 427-residue protein sequence, read N- to C-terminus: Glutamate-1-semialdehyde 2,1-aminomutase (427 aa).

N6-(pyridoxal phosphate)lysine is present on K265.

This sequence belongs to the class-III pyridoxal-phosphate-dependent aminotransferase family. HemL subfamily. Homodimer. It depends on pyridoxal 5'-phosphate as a cofactor.

It is found in the cytoplasm. The enzyme catalyses (S)-4-amino-5-oxopentanoate = 5-aminolevulinate. Its pathway is porphyrin-containing compound metabolism; protoporphyrin-IX biosynthesis; 5-aminolevulinate from L-glutamyl-tRNA(Glu): step 2/2. The sequence is that of Glutamate-1-semialdehyde 2,1-aminomutase from Colwellia psychrerythraea (strain 34H / ATCC BAA-681) (Vibrio psychroerythus).